The sequence spans 415 residues: Lipoyl synthase, apicoplast (415 aa).

The first 23 residues, 1–23 (MHFGIPSLFYLYILFSIIMRIKC), serve as a signal peptide directing secretion. Positions 153, 158, 164, 179, 183, 186, and 394 each coordinate [4Fe-4S] cluster. The region spanning 165-383 (WNIGTATIML…KEEGLKMGFK (219 aa)) is the Radical SAM core domain.

This sequence belongs to the radical SAM superfamily. Lipoyl synthase family. [4Fe-4S] cluster serves as cofactor.

The protein resides in the plastid. It is found in the apicoplast. The enzyme catalyses [[Fe-S] cluster scaffold protein carrying a second [4Fe-4S](2+) cluster] + N(6)-octanoyl-L-lysyl-[protein] + 2 oxidized [2Fe-2S]-[ferredoxin] + 2 S-adenosyl-L-methionine + 4 H(+) = [[Fe-S] cluster scaffold protein] + N(6)-[(R)-dihydrolipoyl]-L-lysyl-[protein] + 4 Fe(3+) + 2 hydrogen sulfide + 2 5'-deoxyadenosine + 2 L-methionine + 2 reduced [2Fe-2S]-[ferredoxin]. It functions in the pathway protein modification; protein lipoylation via endogenous pathway; protein N(6)-(lipoyl)lysine from octanoyl-[acyl-carrier-protein]: step 2/2. Catalyzes the radical-mediated insertion of two sulfur atoms into the C-6 and C-8 positions of the octanoyl moiety bound to the lipoyl domains of lipoate-dependent enzymes, thereby converting the octanoylated domains into lipoylated derivatives. In Plasmodium falciparum (isolate 3D7), this protein is Lipoyl synthase, apicoplast.